A 270-amino-acid polypeptide reads, in one-letter code: L-fucose dehydrogenase (270 aa).

Positions 19, 21, 40, 41, 62, 63, 89, 154, 158, 187, 189, and 191 each coordinate NAD(+). Residue Y154 is the Proton acceptor of the active site.

It belongs to the short-chain dehydrogenases/reductases (SDR) family. Homotetramer. Detected in retina.

It localises to the cytoplasm. It carries out the reaction L-fucose + NAD(+) = L-fucono-1,5-lactone + NADH + H(+). The enzyme catalyses D-arabinose + NAD(+) = D-arabinono-1,5-lactone + NADH + H(+). It catalyses the reaction L-galactose + NAD(+) = L-galactono-1,5-lactone + NADH + H(+). Its pathway is carbohydrate degradation; L-fucose degradation. Catalyzes the NAD(+)-dependent oxidation of L-fucose, yielding L-fucono-1,5-lactone, which rapidly converts spontaneously to L-fucone-1,4-lactone. Can also act on D-arabinose and L-galactose, with lower catalytic efficiency. Does not use NADPH. May be the initial enzyme of the putative L-fucose degradation pathway in mammals. The chain is L-fucose dehydrogenase (HSD17B14) from Bos taurus (Bovine).